Consider the following 600-residue polypeptide: PWWP domain-containing protein 2B (600 aa).

Disordered regions lie at residues 81-115, 143-171, 186-350, 366-408, and 426-477; these read ETGP…PVPA, WVPQ…LILS, KSTV…LGDG, GCPR…PQGK, and DCTS…TVPP. Residues 104–115 are compositionally biased toward pro residues; that stretch reads EPPPPLIPPVPA. Over residues 151 to 160 the composition is skewed to basic residues; it reads TIKRTRRRLS. A compositionally biased stretch (polar residues) spans 187-200; it reads STVSPQEASPSPLN. S190 and S210 each carry phosphoserine. Over residues 239 to 252 the composition is skewed to basic and acidic residues; it reads EKREEDRVAGERVP. A Phosphoserine modification is found at S254. Residues 286–297 are compositionally biased toward polar residues; sequence PQQSLQNGSQDS. A compositionally biased stretch (basic and acidic residues) spans 298 to 309; it reads EVSRDVEPRGGG. Pro residues predominate over residues 328-339; sequence PVPPISDLPPPK. A compositionally biased stretch (low complexity) spans 381-395; that stretch reads DGSSHGLEDLSSGSS. Residues 443-456 show a composition bias toward polar residues; that stretch reads SSGSEVTSPDTGDL. Position 457 is a phosphoserine (S457). Residues 457-468 show a composition bias toward low complexity; it reads SSGDSASVPSSS. Residues 500 to 560 form the PWWP domain; that stretch reads VGDIVWGKIH…ISKLSPFSEF (61 aa).

As to quaternary structure, component of a MTA1-specific subcomplex of the NuRD complex composed of PWWP2B, MTA1 and HDAC1 but does not contain CHD4 and MBD3. Interacts with MTA1, MTA2, MTA3, HDAC1, HDAC2, RBBP4, RBBP7, BRCC3 and ZNF516. Does not interact with CHD4 and MBD3. Deubiquitinated by BRCC3; leading to its stabilization. As to expression, expressed in the brown adipose tissue.

It localises to the nucleus. Chromatin-binding protein that acts as an adapter between distinct nucleosome components (H3K36me3 or H2A.Z) and chromatin-modifying complexes, contributing to the regulation of the levels of histone acetylation at actively transcribed genes. Competes with CHD4 and MBD3 for interaction with MTA1 to form a NuRD subcomplex, preventing the formation of full NuRD complex (containing CHD4 and MBD3), leading to recruitment of HDACs to gene promoters resulting in turn in the deacetylation of nearby H3K27 and H2A.Z. Plays a role in facilitating transcriptional elongation through regulation of histone acetylation. Negatively regulates brown adipocyte thermogenesis by interacting with and stabilizing HDAC1 at the UCP1 gene promoter, thereby promoting histone deacetylation at the promoter leading to the repression of UCP1 expression. This Mus musculus (Mouse) protein is PWWP domain-containing protein 2B (Pwwp2b).